The following is a 133-amino-acid chain: Urease subunit beta (133 aa).

Residues 106–133 (VFRPNDSNQNAAVKNDAGEDNANKKGGK) form a disordered region.

It belongs to the urease beta subunit family. As to quaternary structure, heterotrimer of UreA (gamma), UreB (beta) and UreC (alpha) subunits. Three heterotrimers associate to form the active enzyme.

It localises to the cytoplasm. It carries out the reaction urea + 2 H2O + H(+) = hydrogencarbonate + 2 NH4(+). It functions in the pathway nitrogen metabolism; urea degradation; CO(2) and NH(3) from urea (urease route): step 1/1. The protein is Urease subunit beta of Staphylococcus epidermidis (strain ATCC 12228 / FDA PCI 1200).